We begin with the raw amino-acid sequence, 228 residues long: Ribonuclease HII (228 aa).

The RNase H type-2 domain occupies 11 to 202; sequence GPVAGVDEAG…VVAAAQLHGM (192 aa). The a divalent metal cation site is built by aspartate 17, glutamate 18, and aspartate 111.

Belongs to the RNase HII family. Mn(2+) serves as cofactor. The cofactor is Mg(2+).

It localises to the cytoplasm. The enzyme catalyses Endonucleolytic cleavage to 5'-phosphomonoester.. Endonuclease that specifically degrades the RNA of RNA-DNA hybrids. This Saccharopolyspora erythraea (strain ATCC 11635 / DSM 40517 / JCM 4748 / NBRC 13426 / NCIMB 8594 / NRRL 2338) protein is Ribonuclease HII.